The sequence spans 363 residues: S-adenosylmethionine:tRNA ribosyltransferase-isomerase (363 aa).

Belongs to the QueA family. As to quaternary structure, monomer.

The protein localises to the cytoplasm. The catalysed reaction is 7-aminomethyl-7-carbaguanosine(34) in tRNA + S-adenosyl-L-methionine = epoxyqueuosine(34) in tRNA + adenine + L-methionine + 2 H(+). The protein operates within tRNA modification; tRNA-queuosine biosynthesis. Functionally, transfers and isomerizes the ribose moiety from AdoMet to the 7-aminomethyl group of 7-deazaguanine (preQ1-tRNA) to give epoxyqueuosine (oQ-tRNA). The protein is S-adenosylmethionine:tRNA ribosyltransferase-isomerase of Mannheimia succiniciproducens (strain KCTC 0769BP / MBEL55E).